The primary structure comprises 354 residues: Ferredoxin--NADP reductase (354 aa).

FAD-binding residues include D42, Q50, Y55, I95, F130, D299, and T339.

The protein belongs to the ferredoxin--NADP reductase type 2 family. In terms of assembly, homodimer. It depends on FAD as a cofactor.

It catalyses the reaction 2 reduced [2Fe-2S]-[ferredoxin] + NADP(+) + H(+) = 2 oxidized [2Fe-2S]-[ferredoxin] + NADPH. This is Ferredoxin--NADP reductase from Acidovorax sp. (strain JS42).